The following is a 699-amino-acid chain: tRNA 5-methylaminomethyl-2-thiouridine biosynthesis bifunctional protein MnmC (699 aa).

A tRNA (mnm(5)s(2)U34)-methyltransferase region spans residues 1–260 (MTAKPHISCQ…ERKLLRQQAN (260 aa)). Positions 282–699 (IGGGLASAHL…LRKLLKGKAL (418 aa)) are FAD-dependent cmnm(5)s(2)U34 oxidoreductase.

This sequence in the N-terminal section; belongs to the methyltransferase superfamily. tRNA (mnm(5)s(2)U34)-methyltransferase family. It in the C-terminal section; belongs to the DAO family. The cofactor is FAD.

The protein localises to the cytoplasm. It catalyses the reaction 5-aminomethyl-2-thiouridine(34) in tRNA + S-adenosyl-L-methionine = 5-methylaminomethyl-2-thiouridine(34) in tRNA + S-adenosyl-L-homocysteine + H(+). Functionally, catalyzes the last two steps in the biosynthesis of 5-methylaminomethyl-2-thiouridine (mnm(5)s(2)U) at the wobble position (U34) in tRNA. Catalyzes the FAD-dependent demodification of cmnm(5)s(2)U34 to nm(5)s(2)U34, followed by the transfer of a methyl group from S-adenosyl-L-methionine to nm(5)s(2)U34, to form mnm(5)s(2)U34. The polypeptide is tRNA 5-methylaminomethyl-2-thiouridine biosynthesis bifunctional protein MnmC (Shewanella oneidensis (strain ATCC 700550 / JCM 31522 / CIP 106686 / LMG 19005 / NCIMB 14063 / MR-1)).